The primary structure comprises 341 residues: Thymidine kinase (341 aa).

Glycine 19–threonine 26 provides a ligand contact to ATP. The active-site Proton acceptor is glutamate 48. Substrate is bound by residues tyrosine 66 and glutamine 90. An ATP-binding site is contributed by arginine 183. Arginine 189 contributes to the substrate binding site.

The protein belongs to the herpesviridae thymidine kinase family. Homodimer.

It carries out the reaction thymidine + ATP = dTMP + ADP + H(+). In terms of biological role, catalyzes the transfer of the gamma-phospho group of ATP to thymidine to generate dTMP in the salvage pathway of pyrimidine synthesis. The dTMP serves as a substrate for DNA polymerase during viral DNA replication. Allows the virus to be reactivated and to grow in non-proliferative cells lacking a high concentration of phosphorylated nucleic acid precursors. The sequence is that of Thymidine kinase from Varicella-zoster virus (strain Oka vaccine) (HHV-3).